A 699-amino-acid chain; its full sequence is NAD(P)H-quinone oxidoreductase subunit 5, chloroplastic (699 aa).

Transmembrane regions (helical) follow at residues 1 to 21, 32 to 52, 81 to 101, 117 to 137, 139 to 159, 177 to 197, 216 to 236, 250 to 270, 272 to 292, 319 to 339, 346 to 366, 388 to 408, 417 to 437, 539 to 559, and 598 to 618; these read WIIP…LLLF, WAFP…NLSI, IDPL…TVLI, FAYM…SNLI, IYIF…FWFT, GDFG…SFEF, LFVT…SAQF, TPIS…FLVA, LLPL…IGII, LGYM…FHLI, ALLF…VGYS, ISFL…CFWS, WLYS…TAFY, LFPL…GISF, and IFSV…YKPI.

It belongs to the complex I subunit 5 family. NDH is composed of at least 16 different subunits, 5 of which are encoded in the nucleus.

It is found in the plastid. The protein resides in the chloroplast thylakoid membrane. The enzyme catalyses a plastoquinone + NADH + (n+1) H(+)(in) = a plastoquinol + NAD(+) + n H(+)(out). It catalyses the reaction a plastoquinone + NADPH + (n+1) H(+)(in) = a plastoquinol + NADP(+) + n H(+)(out). Its function is as follows. NDH shuttles electrons from NAD(P)H:plastoquinone, via FMN and iron-sulfur (Fe-S) centers, to quinones in the photosynthetic chain and possibly in a chloroplast respiratory chain. The immediate electron acceptor for the enzyme in this species is believed to be plastoquinone. Couples the redox reaction to proton translocation, and thus conserves the redox energy in a proton gradient. In Digitalis grandiflora (Yellow foxglove), this protein is NAD(P)H-quinone oxidoreductase subunit 5, chloroplastic (ndhF).